The primary structure comprises 293 residues: 3-methyl-2-oxobutanoate hydroxymethyltransferase (293 aa).

Positions methionine 1–proline 25 are disordered. Residues aspartate 67 and aspartate 110 each coordinate Mg(2+). 3-methyl-2-oxobutanoate contacts are provided by residues aspartate 67–serine 68, aspartate 110, and lysine 139. Glutamate 141 serves as a coordination point for Mg(2+). Glutamate 208 functions as the Proton acceptor in the catalytic mechanism.

Belongs to the PanB family. Homodecamer; pentamer of dimers. Requires Mg(2+) as cofactor.

Its subcellular location is the cytoplasm. It catalyses the reaction 3-methyl-2-oxobutanoate + (6R)-5,10-methylene-5,6,7,8-tetrahydrofolate + H2O = 2-dehydropantoate + (6S)-5,6,7,8-tetrahydrofolate. Its pathway is cofactor biosynthesis; (R)-pantothenate biosynthesis; (R)-pantoate from 3-methyl-2-oxobutanoate: step 1/2. Catalyzes the reversible reaction in which hydroxymethyl group from 5,10-methylenetetrahydrofolate is transferred onto alpha-ketoisovalerate to form ketopantoate. In Acidovorax sp. (strain JS42), this protein is 3-methyl-2-oxobutanoate hydroxymethyltransferase.